An 83-amino-acid chain; its full sequence is DNA-directed RNA polymerase subunit Rpo5 (83 aa).

Belongs to the archaeal Rpo5/eukaryotic RPB5 RNA polymerase subunit family. As to quaternary structure, part of the RNA polymerase complex.

It localises to the cytoplasm. The catalysed reaction is RNA(n) + a ribonucleoside 5'-triphosphate = RNA(n+1) + diphosphate. Its function is as follows. DNA-dependent RNA polymerase (RNAP) catalyzes the transcription of DNA into RNA using the four ribonucleoside triphosphates as substrates. This Nitrosopumilus maritimus (strain SCM1) protein is DNA-directed RNA polymerase subunit Rpo5.